We begin with the raw amino-acid sequence, 251 residues long: tRNA pseudouridine synthase A (251 aa).

The active-site Nucleophile is the Asp-52. Tyr-113 lines the substrate pocket.

It belongs to the tRNA pseudouridine synthase TruA family. Homodimer.

It carries out the reaction uridine(38/39/40) in tRNA = pseudouridine(38/39/40) in tRNA. In terms of biological role, formation of pseudouridine at positions 38, 39 and 40 in the anticodon stem and loop of transfer RNAs. The sequence is that of tRNA pseudouridine synthase A from Brucella anthropi (strain ATCC 49188 / DSM 6882 / CCUG 24695 / JCM 21032 / LMG 3331 / NBRC 15819 / NCTC 12168 / Alc 37) (Ochrobactrum anthropi).